Reading from the N-terminus, the 549-residue chain is Hydroxylamine reductase (549 aa).

Cysteine 3, cysteine 6, cysteine 15, and cysteine 21 together coordinate [4Fe-4S] cluster. Hybrid [4Fe-2O-2S] cluster-binding residues include histidine 248, glutamate 272, cysteine 316, cysteine 403, cysteine 431, cysteine 456, glutamate 490, and lysine 492. Cysteine 403 is subject to Cysteine persulfide.

Belongs to the HCP family. [4Fe-4S] cluster serves as cofactor. It depends on hybrid [4Fe-2O-2S] cluster as a cofactor.

The protein resides in the cytoplasm. The enzyme catalyses A + NH4(+) + H2O = hydroxylamine + AH2 + H(+). In terms of biological role, catalyzes the reduction of hydroxylamine to form NH(3) and H(2)O. The chain is Hydroxylamine reductase from Rhodospirillum rubrum (strain ATCC 11170 / ATH 1.1.1 / DSM 467 / LMG 4362 / NCIMB 8255 / S1).